Consider the following 1239-residue polypeptide: MASTMIPYTVNIKLAARTLTGTLNLQNKTAVDWGWQGLIAQGCHSSILIIDPNTAQTIQVLERHKANVVKVKWSRENYHHSLSSPYSLRLASADAAGKIIVWDVVSGMAHCEIQEHSKPIQDMDWLWAQDASRDLLLAVHPPNYIVLWNGDTGTKLWKKSYAENILSFSFDPFEPSNLALLTSEGIVFITDFSHSKPPGSGGKKVYIASPHSSPAHSKPAAAQPTGAKKALNKVKVLITNEKPTAEAVTLNDCLQLSYLPSKRNHMLLLYPREILILDLELSQTVGVVAIERSGVPFIQVIPCAQRDALYCLHENGCITLRVCRSTTPSPNETVTDPEQNSQELVYDLRSQCDAIRVTKTVRPYRVVICPVNENKAVLVVSDGRVMLWELKAHASKSSSNLSSGLPPLYSAVNFCGTPLRQNQKCIPDLSLNSMIGHSLIPGVDSPRPLADQKEVHLKFLLTGLLSGLPLPPFSLRMCPPLTTKNINHYQPLLAVGTSNGSVLVYNLTSGLLHKELSVHSCEVRGIEWISLTSFLSFATSVPNNLGLVRNELQHVDLRTGRCFAFRGERGNDEPAIEMIKVSHLKQYLVVVFRDKPLELWDVRTGTLLREMAKNFPTVTALEWSPSHNLKSLKKKQLAAREAMARQTTLADAEQSSVESSVISLLQDAESKSESSQGISAREHFVFTDTDGQVYHITVEGNTVKDGARIPPDGSMGSIACIAWKGDTLVLGDVDGNLNFWDLKARLSRGVPTHRGWVKKIRFAPGKGNQKLLVMYTDGAEVWDTKEVQMVSSIRVGRNVNYRILDIDWCTSDKVVLASDDGCVRVLEMAMKSASYRMDEQDLTDPVWCPYLLLPRAALTLKAFLLLQPWMDTFTMDITQVDYKEKDEIKGLIQEQLNSLSNDIKSVLQDPNLSLLQRCLLVSRLFGDESDLQFWTVASHYIQAFAQSAQSNESVPEGQAAASHLDICHDILCESSFFQGFQLERVRLQEVKRSSYEHTKKCADQLLLLGQTDRAVQLLLETSADNSSYYCDSLKACLVTTITSSGPSQSTIKLVATNMIANGKLAEGVQLLCLIDKAADACRYLQTYGEWTRAAWLAKVRLNAAEGSDVLKRWAEHLCSPQVNQKSKAMLVLLSLGCFQKVGEMLHSMRYFDRAALFIEACLKYGVMETNDDINKLVGAAFVDYAKLLRSIGLKQGAVHWASRAGEAGKQLLEDLSQTEGTGTESSPADDTDNSLVNIE.

WD repeat units follow at residues 63 to 112 (RHKA…AHCE), 115 to 158 (EHSK…KLWK), 358 to 398 (TKTV…SKSS), 476 to 515 (RMCP…LHKE), 571 to 610 (NDEP…LLRE), 713 to 750 (GSMG…SRGV), 752 to 792 (THRG…MVSS), 798 to 836 (NVNY…ASYR), and 898 to 944 (SLSN…IQAF). The tract at residues 1213–1239 (EDLSQTEGTGTESSPADDTDNSLVNIE) is disordered. A compositionally biased stretch (polar residues) spans 1215 to 1226 (LSQTEGTGTESS).

As to quaternary structure, component of the complex WDR11.

The protein localises to the cytoplasm. It localises to the cytoskeleton. Its subcellular location is the cilium basal body. The protein resides in the nucleus. It is found in the cilium axoneme. The protein localises to the cytoplasmic vesicle. It localises to the golgi apparatus. Its subcellular location is the trans-Golgi network. Functionally, involved in the Hedgehog (Hh) signaling pathway, is essential for normal ciliogenesis. Regulates the proteolytic processing of gli3 and cooperates with the transcription factor emx1 in the induction of downstream Hh pathway gene expression and gonadotropin-releasing hormone production. WDR11 complex facilitates the tethering of Adaptor protein-1 complex (AP-1)-derived vesicles. In Danio rerio (Zebrafish), this protein is WD repeat-containing protein 11 (wdr11).